Here is a 120-residue protein sequence, read N- to C-terminus: Chaperonin GroEL (120 aa).

23-27 (DGTTT) provides a ligand contact to ATP.

The protein belongs to the chaperonin (HSP60) family. In terms of assembly, forms a cylinder of 14 subunits composed of two heptameric rings stacked back-to-back. Interacts with the co-chaperonin GroES.

Its subcellular location is the cytoplasm. It carries out the reaction ATP + H2O + a folded polypeptide = ADP + phosphate + an unfolded polypeptide.. Functionally, together with its co-chaperonin GroES, plays an essential role in assisting protein folding. The GroEL-GroES system forms a nano-cage that allows encapsulation of the non-native substrate proteins and provides a physical environment optimized to promote and accelerate protein folding. This is Chaperonin GroEL from Mycobacterium malmoense.